A 238-amino-acid polypeptide reads, in one-letter code: Probable transcriptional regulatory protein SSU05_0402 (238 aa).

Belongs to the TACO1 family. YeeN subfamily.

The protein resides in the cytoplasm. This Streptococcus suis (strain 05ZYH33) protein is Probable transcriptional regulatory protein SSU05_0402.